Consider the following 486-residue polypeptide: MSNNFKDDFEKNRQSIDTNSHQDHTEDVEKDQSELEHQDTIENTEQQFPPRNAQRRKRRRDLATNHNKQVHNESQTSEDNVQNEAGTIDDRQVESSHSTESQEPSHQDSTPQHEEEYYNKNAFAMDKSHPEPIEDNDKHDTIKNAENNTEHSTVSDKSEAEQSQQPKPYFTTGANQSETSKNEHDNDSVKQDQDEPKEHHNGKKAAAIGAGTAGVAGAAGAMAASKAKKHSNDAQNKSNSGKANNSTEDKASQDKSKDHHNGKKGAAIGAGTAGLAGGAASKSASAASKPHASNNASQNHDEHDNHDRDKERKKGGMAKVLLPLIAAVLIIGALAIFGGMALNNHNNGTKENKIANTNKNNADESKDKDTSKDASKDKSKSTDSDKSKEDQDKATKDESDNDQNNANQANNQAQNNQNQQQANQNQQQQQQRQGGGQRHTVNGQENLYRIAIQYYGSGSPENVEKIRRANGLSGNNIRNGQQIVIP.

Residues 1–40 (MSNNFKDDFEKNRQSIDTNSHQDHTEDVEKDQSELEHQDT) are compositionally biased toward basic and acidic residues. The tract at residues 1-314 (MSNNFKDDFE…NHDRDKERKK (314 aa)) is disordered. Residues 2–204 (SNNFKDDFEK…EPKEHHNGKK (203 aa)) lie on the Extracellular side of the membrane. Residues 14–34 (QSIDTNSHQDHTEDVEKDQSE) form an elastin-binding region. The segment covering 64-85 (TNHNKQVHNESQTSEDNVQNEA) has biased composition (polar residues). Basic and acidic residues-rich tracts occupy residues 103–118 (EPSH…EEYY) and 126–143 (DKSH…DTIK). Positions 161 to 179 (EQSQQPKPYFTTGANQSET) are enriched in polar residues. The segment covering 180–199 (SKNEHDNDSVKQDQDEPKEH) has biased composition (basic and acidic residues). The segment covering 204–225 (KAAAIGAGTAGVAGAAGAMAAS) has biased composition (low complexity). The helical transmembrane segment at 205 to 225 (AAAIGAGTAGVAGAAGAMAAS) threads the bilayer. At 226-319 (KAKKHSNDAQ…KERKKGGMAK (94 aa)) the chain is on the cytoplasmic side. Residues 233–246 (DAQNKSNSGKANNS) show a composition bias toward polar residues. Residues 247-259 (TEDKASQDKSKDH) are compositionally biased toward basic and acidic residues. Positions 278 to 297 (GAASKSASAASKPHASNNAS) are enriched in low complexity. The span at 299–314 (NHDEHDNHDRDKERKK) shows a compositional bias: basic and acidic residues. The helical transmembrane segment at 320 to 340 (VLLPLIAAVLIIGALAIFGGM) threads the bilayer. At 341 to 486 (ALNNHNNGTK…IRNGQQIVIP (146 aa)) the chain is on the extracellular side. The disordered stretch occupies residues 351 to 440 (ENKIANTNKN…QRQGGGQRHT (90 aa)). Basic and acidic residues predominate over residues 361-398 (NADESKDKDTSKDASKDKSKSTDSDKSKEDQDKATKDE). The span at 403-431 (QNNANQANNQAQNNQNQQQANQNQQQQQQ) shows a compositional bias: low complexity. One can recognise a LysM domain in the interval 437 to 485 (QRHTVNGQENLYRIAIQYYGSGSPENVEKIRRANGLSGNNIRNGQQIVI).

Its subcellular location is the cell membrane. Functionally, promotes binding of soluble elastin peptides and tropoelastin to S.aureus cells although it is not able to promote bacterial adherence to immobilized elastin and, therefore, is not a microbial surface component recognizing adhesive matrix molecule (MSCRAMM). The polypeptide is Elastin-binding protein EbpS (ebpS) (Staphylococcus aureus (strain USA300)).